The sequence spans 398 residues: Sex hormone-binding globulin (398 aa).

Residues methionine 1–alanine 31 form the signal peptide. 2 Laminin G-like domains span residues valine 41–cysteine 213 and glycine 220–cysteine 386. 2 cysteine pairs are disulfide-bonded: cysteine 189–cysteine 213 and cysteine 358–cysteine 386. Asparagine 376 and asparagine 392 each carry an N-linked (GlcNAc...) asparagine glycan.

Homodimer.

Its subcellular location is the secreted. In terms of biological role, functions as an androgen transport protein, but may also be involved in receptor mediated processes. Each dimer binds one molecule of steroid. Specific for 5-alpha-dihydrotestosterone, testosterone, and 17-beta-estradiol. Regulates the plasma metabolic clearance rate of steroid hormones by controlling their plasma concentration. The chain is Sex hormone-binding globulin (SHBG) from Oryctolagus cuniculus (Rabbit).